Here is a 230-residue protein sequence, read N- to C-terminus: CASP-like protein 2A2 (230 aa).

The interval 1–23 (MEKKDEGNPPMAVMGSRDENEDV) is disordered. Residues 1 to 29 (MEKKDEGNPPMAVMGSRDENEDVKSTMRT) are Cytoplasmic-facing. Residues 30–50 (AETMLRLVPVALCVSALVVML) form a helical membrane-spanning segment. Over 51–71 (KNTQTNDYGSLSYSDLGAFRY) the chain is Extracellular. The chain crosses the membrane as a helical span at residues 72 to 92 (LVNANGICAGYSLLSAVIVAM). The Cytoplasmic portion of the chain corresponds to 93–100 (PRAWTMPQ). Residues 101–121 (AWTFFLLDQVLTYVILAAGTV) form a helical membrane-spanning segment. Topologically, residues 122 to 151 (STEVLYLANKGDTSIAWSAACASFGGFCHK) are extracellular. Residues 152–172 (ALISTVITFVAVIFYAALSLV) form a helical membrane-spanning segment. The Cytoplasmic portion of the chain corresponds to 173–230 (SSYKLFSKYDAPVVTQSGEGIKTVTLGSPPPPPPPPPSNLHLHLHAKLACPAHNNSPN).

This sequence belongs to the Casparian strip membrane proteins (CASP) family. As to quaternary structure, homodimer and heterodimers.

The protein localises to the cell membrane. This chain is CASP-like protein 2A2, found in Populus trichocarpa (Western balsam poplar).